The chain runs to 317 residues: Acetyl-coenzyme A carboxylase carboxyl transferase subunit alpha (317 aa).

One can recognise a CoA carboxyltransferase C-terminal domain in the interval 40-293; it reads LEKRSADALK…GDIIAASLRS (254 aa).

This sequence belongs to the AccA family. As to quaternary structure, acetyl-CoA carboxylase is a heterohexamer composed of biotin carboxyl carrier protein (AccB), biotin carboxylase (AccC) and two subunits each of ACCase subunit alpha (AccA) and ACCase subunit beta (AccD).

It is found in the cytoplasm. It carries out the reaction N(6)-carboxybiotinyl-L-lysyl-[protein] + acetyl-CoA = N(6)-biotinyl-L-lysyl-[protein] + malonyl-CoA. It functions in the pathway lipid metabolism; malonyl-CoA biosynthesis; malonyl-CoA from acetyl-CoA: step 1/1. Component of the acetyl coenzyme A carboxylase (ACC) complex. First, biotin carboxylase catalyzes the carboxylation of biotin on its carrier protein (BCCP) and then the CO(2) group is transferred by the carboxyltransferase to acetyl-CoA to form malonyl-CoA. The sequence is that of Acetyl-coenzyme A carboxylase carboxyl transferase subunit alpha from Brucella melitensis biotype 2 (strain ATCC 23457).